The chain runs to 521 residues: Ribonuclease Y (521 aa).

A helical transmembrane segment spans residues 1–21 (MFFIEHPFVYLGLDLIVGCLI). The 61-residue stretch at 211–271 (TVSMVPLPSD…VRREVARLAL (61 aa)) folds into the KH domain. Residues 337–430 (VLQHSLEVAF…VQAADALSGA (94 aa)) form the HD domain.

The protein belongs to the RNase Y family.

It is found in the cell membrane. In terms of biological role, endoribonuclease that initiates mRNA decay. This is Ribonuclease Y from Desulfotalea psychrophila (strain LSv54 / DSM 12343).